The chain runs to 300 residues: Cysteine-rich venom protein (300 aa).

Positions 1–21 (MLSTMQTVGAVLMLSIVLVAG) are cleaved as a signal peptide. Positions 22–24 (RKR) are excised as a propeptide. The 122-residue stretch at 62 to 183 (LEMHNKIRAD…GNNKYFVCNY (122 aa)) folds into the SCP domain.

Post-translationally, contains 11 disulfide bonds. In terms of tissue distribution, expressed by the venom duct.

The protein localises to the secreted. Protease responsible for cleaving the conotoxins from their propeptide precursors. The target propeptide requires minimum four residues including a leucine N-terminal of the cleavage site for efficient substrate processing (example: Xaa-Xaa-Xaa-Leu-Asn-Lys-Arg-toxin). This is Cysteine-rich venom protein from Conus textile (Cloth-of-gold cone).